The sequence spans 647 residues: uncharacterized protein (647 aa).

This is an uncharacterized protein from Cryphonectria parasitica mycoreovirus 1 (strain 9B21) (CpMYRV-1).